The chain runs to 601 residues: Elongation factor 4 (601 aa).

The tr-type G domain occupies 5-187; that stretch reads DKIRNFSIIA…SIVKDLPAPQ (183 aa). GTP contacts are provided by residues 17–22 and 134–137; these read DHGKST and NKVD.

This sequence belongs to the TRAFAC class translation factor GTPase superfamily. Classic translation factor GTPase family. LepA subfamily.

The protein resides in the cell inner membrane. It carries out the reaction GTP + H2O = GDP + phosphate + H(+). Functionally, required for accurate and efficient protein synthesis under certain stress conditions. May act as a fidelity factor of the translation reaction, by catalyzing a one-codon backward translocation of tRNAs on improperly translocated ribosomes. Back-translocation proceeds from a post-translocation (POST) complex to a pre-translocation (PRE) complex, thus giving elongation factor G a second chance to translocate the tRNAs correctly. Binds to ribosomes in a GTP-dependent manner. The chain is Elongation factor 4 from Maridesulfovibrio salexigens (strain ATCC 14822 / DSM 2638 / NCIMB 8403 / VKM B-1763) (Desulfovibrio salexigens).